Consider the following 181-residue polypeptide: Mitochondrial pyruvate carrier-like protein (181 aa).

Transmembrane regions (helical) follow at residues 23–42 (YLAS…PLAA) and 52–74 (IISG…FAYR). Residues 125 to 154 (TGSVDSSATSTGSVDSSATSTGSVDSSAAT) are disordered.

This sequence belongs to the mitochondrial pyruvate carrier (MPC) (TC 2.A.105) family.

The protein localises to the mitochondrion inner membrane. Functionally, may mediate the uptake of pyruvate into mitochondria. The chain is Mitochondrial pyruvate carrier-like protein from Bos taurus (Bovine).